Consider the following 72-residue polypeptide: UPF0270 protein YheU (72 aa).

The protein belongs to the UPF0270 family.

The polypeptide is UPF0270 protein YheU (Escherichia coli (strain ATCC 8739 / DSM 1576 / NBRC 3972 / NCIMB 8545 / WDCM 00012 / Crooks)).